A 217-amino-acid chain; its full sequence is MAWAISGLLVILGYLLGSIPTGYLMVRALKGIDIREQGSGSTGATNVLRTVGKTAAIAVLIIDMLKAMVAVGGVKLLYFGVPSAIVPLDWKPWLIVTVASAAILGHSKSIFLNFTGGKSVASSLGVLLVLNPLVALGALASFLFMLGITRIVSLSSITGAIAVNLLMLVLHQPLAYILFAILAGIYVIVRHKTNISRILQGTEPKIGQKLTEEAETV.

5 helical membrane passes run 1 to 21 (MAWA…SIPT), 54 to 74 (TAAI…VGGV), 84 to 104 (AIVP…AAIL), 126 to 146 (VLLV…LFML), and 165 to 185 (LLML…LAGI).

This sequence belongs to the PlsY family. In terms of assembly, probably interacts with PlsX.

Its subcellular location is the cell inner membrane. It catalyses the reaction an acyl phosphate + sn-glycerol 3-phosphate = a 1-acyl-sn-glycero-3-phosphate + phosphate. Its pathway is lipid metabolism; phospholipid metabolism. Functionally, catalyzes the transfer of an acyl group from acyl-phosphate (acyl-PO(4)) to glycerol-3-phosphate (G3P) to form lysophosphatidic acid (LPA). This enzyme utilizes acyl-phosphate as fatty acyl donor, but not acyl-CoA or acyl-ACP. This chain is Glycerol-3-phosphate acyltransferase, found in Rippkaea orientalis (strain PCC 8801 / RF-1) (Cyanothece sp. (strain PCC 8801)).